Consider the following 108-residue polypeptide: MIITTTDVIQGSEVEEYLGIVTAEVVYGSNALRDFFAGIRDIIGGRTGSYEELFKQGQEEAIAELEKRARRMGANAVVGIEIDTGTINVDEKGALLLITAIGTAVKLA.

This sequence belongs to the UPF0145 family.

The protein is UPF0145 protein Tery_3795 of Trichodesmium erythraeum (strain IMS101).